An 87-amino-acid chain; its full sequence is Small ribosomal subunit protein uS17 (87 aa).

The protein belongs to the universal ribosomal protein uS17 family. Part of the 30S ribosomal subunit.

One of the primary rRNA binding proteins, it binds specifically to the 5'-end of 16S ribosomal RNA. The polypeptide is Small ribosomal subunit protein uS17 (Dichelobacter nodosus (strain VCS1703A)).